The chain runs to 306 residues: MSIRILPQEEIQQAASSFHNPPLLYANPKNLYARRAKRLRQLAEHNPFGDYLEFVANIVEVQLDLLENQPIANRVGELTAYLEAHQGVKPLDVKTFKRSDEWQKLLLAFIDKFKPYASDTVLATLEWLEKASNSELEMLADHLLNECYEEVGADKAVFLWAVLSLYWVQLTQQLPRNTKAEYGEERHTCPVCNSAPIASVVHFGETQGLRYLHCSLCESEWNMVRAKCSNCEQTGKLDYWSLDSMDAAVKAESCGDCESYLKVMYQDKDPHVEPIADDLGTLFLDAEMEQKGLARSAINPFLFQVE.

It belongs to the FdhE family.

It is found in the cytoplasm. Functionally, necessary for formate dehydrogenase activity. The protein is Protein FdhE homolog of Glaesserella parasuis serovar 5 (strain SH0165) (Haemophilus parasuis).